Reading from the N-terminus, the 676-residue chain is Translation initiation factor IF-2, mitochondrial (676 aa).

Residues 143–326 (KRAPVVTIMG…MDIRAENSPK (184 aa)) form the tr-type G domain. Residues 152-159 (GHVDHGKT) are G1. 152-159 (GHVDHGKT) lines the GTP pocket. Residues 177 to 181 (GITQH) form a G2 region. GTP-binding positions include 200–203 (DTPG) and 254–257 (TKID). Positions 200–203 (DTPG) are G3. Positions 254 to 257 (TKID) are G4. Residues 296-298 (SAK) form a G5 region.

It belongs to the TRAFAC class translation factor GTPase superfamily. Classic translation factor GTPase family. IF-2 subfamily.

The protein resides in the mitochondrion. Its function is as follows. One of the essential components for the initiation of protein synthesis. Protects formylmethionyl-tRNA from spontaneous hydrolysis and promotes its binding to the 30S ribosomal subunits. Also involved in the hydrolysis of GTP during the formation of the 70S ribosomal complex. This is Translation initiation factor IF-2, mitochondrial (IFM1) from Saccharomyces cerevisiae (strain ATCC 204508 / S288c) (Baker's yeast).